Reading from the N-terminus, the 356-residue chain is uncharacterized protein (356 aa).

Belongs to the NAD(P)-dependent epimerase/dehydratase family. Requires NAD(+) as cofactor. NADP(+) is required as a cofactor.

In terms of biological role, putative nucleotide sugar epimerase/dehydrogenase. This is an uncharacterized protein from Sinorhizobium fredii (strain NBRC 101917 / NGR234).